We begin with the raw amino-acid sequence, 899 residues long: RNA-binding motif protein 25 (899 aa).

The segment covering 1 to 20 (MADESSSPATGDPNSQKPES) has biased composition (polar residues). The disordered stretch occupies residues 1 to 112 (MADESSSPAT…SMPQYQPQPG (112 aa)). A compositionally biased stretch (pro residues) spans 26–63 (IPNPNPNPSLTPPPPQQHSQPPVAPLVPPGPPYAPPAQ). Residues 204 to 281 (TTIYIGKIAT…QELLVNVNQA (78 aa)) form the RRM domain. Disordered regions lie at residues 298–572 (KKAK…EQNL) and 611–778 (GESA…KESG). Composition is skewed to basic and acidic residues over residues 317–340 (EQDK…KENI) and 354–372 (EADR…ERLK). The span at 375 to 384 (PLPPPPPPPA) shows a compositional bias: pro residues. Basic and acidic residues predominate over residues 430 to 505 (WSKRNDRRSR…QYEKEKEKEK (76 aa)). A coiled-coil region spans residues 434–578 (NDRRSRERGE…EQNLQQQQLD (145 aa)). Acidic residues predominate over residues 515–524 (YEEEEEEDDD). Positions 526-533 (SRRRWHRA) match the Nuclear localization signal 1 motif. Residues 533 to 568 (AALDERRRRQLREKEDDLADRLKEEEEVAEAKRSAE) show a composition bias toward basic and acidic residues. Residues 626-640 (GSGNESMAIDNNSGS) show a composition bias toward polar residues. 2 stretches are compositionally biased toward basic and acidic residues: residues 723 to 733 (PKEETIETEKQ) and 740 to 778 (DKAS…KESG). The Nuclear localization signal 2 signature appears at 735–742 (SRRSHDKA). One can recognise a PWI domain in the interval 802 to 899 (EDLFSYEINW…EAGVPVKSKA (98 aa)).

As to quaternary structure, specifically associates with functional splicing complexes. Associates with exon junction complex (EJC) proteins. Phosphorylated; the phosphorylation level is repressed by abscisic acid (ABA).

Its subcellular location is the nucleus. Its function is as follows. RNA-binding protein that acts as a regulator of alternative pre-mRNA splicing. Negative regulator of responses to abscisic acid (ABA), including in early development. This Arabidopsis thaliana (Mouse-ear cress) protein is RNA-binding motif protein 25.